A 314-amino-acid chain; its full sequence is Protoheme IX farnesyltransferase 2 (314 aa).

9 helical membrane passes run 32–49 (VMSL…AAPV), 54–76 (LLAV…LNMW), 98–118 (IQPH…VMTL), 120–140 (VLVN…YAVV), 153–173 (IVIG…AVTG), 180–200 (IVLF…LALF), 226–246 (IFAY…LGYT), 249–269 (FYGV…WKVL), and 285–305 (FAYS…DSVV).

The protein belongs to the UbiA prenyltransferase family. Protoheme IX farnesyltransferase subfamily.

Its subcellular location is the cell inner membrane. It catalyses the reaction heme b + (2E,6E)-farnesyl diphosphate + H2O = Fe(II)-heme o + diphosphate. It functions in the pathway porphyrin-containing compound metabolism; heme O biosynthesis; heme O from protoheme: step 1/1. Its function is as follows. Converts heme B (protoheme IX) to heme O by substitution of the vinyl group on carbon 2 of heme B porphyrin ring with a hydroxyethyl farnesyl side group. In Mesorhizobium japonicum (strain LMG 29417 / CECT 9101 / MAFF 303099) (Mesorhizobium loti (strain MAFF 303099)), this protein is Protoheme IX farnesyltransferase 2.